The primary structure comprises 161 residues: Large ribosomal subunit protein bL17 (161 aa).

The segment at Thr126 to Glu161 is disordered. The segment covering Lys130–Ala141 has biased composition (basic residues). Residues Thr142–Ala153 show a composition bias toward low complexity.

It belongs to the bacterial ribosomal protein bL17 family. Part of the 50S ribosomal subunit. Contacts protein L32.

This Parabacteroides distasonis (strain ATCC 8503 / DSM 20701 / CIP 104284 / JCM 5825 / NCTC 11152) protein is Large ribosomal subunit protein bL17.